Reading from the N-terminus, the 108-residue chain is MDKTIDDIDFEKSGGLVPVIVQDANTKEVLTLAYSNRESLELAKKTRKSWFYSRSRNKLWMKGEESGNTQEIKEILVDCDSDAIIYLVEPSGPACHTGERVCFHNELK.

Asp-78 is a Mg(2+) binding site. Cys-79 serves as a coordination point for Zn(2+). Residues Asp-80 and Asp-82 each coordinate Mg(2+). Residues Cys-95 and Cys-102 each coordinate Zn(2+).

Belongs to the PRA-CH family. Homodimer. Mg(2+) is required as a cofactor. Requires Zn(2+) as cofactor.

It is found in the cytoplasm. The enzyme catalyses 1-(5-phospho-beta-D-ribosyl)-5'-AMP + H2O = 1-(5-phospho-beta-D-ribosyl)-5-[(5-phospho-beta-D-ribosylamino)methylideneamino]imidazole-4-carboxamide. It participates in amino-acid biosynthesis; L-histidine biosynthesis; L-histidine from 5-phospho-alpha-D-ribose 1-diphosphate: step 3/9. In terms of biological role, catalyzes the hydrolysis of the adenine ring of phosphoribosyl-AMP. In Nitrosopumilus maritimus (strain SCM1), this protein is Phosphoribosyl-AMP cyclohydrolase.